Here is a 316-residue protein sequence, read N- to C-terminus: MLEMEKPRIDCVEKNSSSNYGRFVIEPLERGYGTTLGNSLRRVLLSSLPGAAVTSIKIDGVLHEFSTIPGVLEDTTEIILNIKKLVLSYTGSERKIIRLEQQGPKEVKASDITPDAEVEILNPDLHLASLDEDGKVEIEMTVERGRGYVSSDQQPQKNDDIVGLIPIDSIFTPVSRVNYTVENARVGKRTDYDRLNLEVWTNGSISPEEAISLSAQILIEYLKLFTEIDDTYAEVEILVEKEEEKKDKILEMSIEELELSVRASNGLKRASINTVGDLIAKNREEMSKIRNLGQKSLEEIERKLKELNLSFRKSED.

The interval 1–229 (MLEMEKPRID…EYLKLFTEID (229 aa)) is alpha N-terminal domain (alpha-NTD). Residues 246 to 316 (KDKILEMSIE…LNLSFRKSED (71 aa)) are alpha C-terminal domain (alpha-CTD).

Belongs to the RNA polymerase alpha chain family. In terms of assembly, homodimer. The RNAP catalytic core consists of 2 alpha, 1 beta, 1 beta' and 1 omega subunit. When a sigma factor is associated with the core the holoenzyme is formed, which can initiate transcription.

The catalysed reaction is RNA(n) + a ribonucleoside 5'-triphosphate = RNA(n+1) + diphosphate. Functionally, DNA-dependent RNA polymerase catalyzes the transcription of DNA into RNA using the four ribonucleoside triphosphates as substrates. The chain is DNA-directed RNA polymerase subunit alpha from Syntrophomonas wolfei subsp. wolfei (strain DSM 2245B / Goettingen).